The following is a 352-amino-acid chain: UDP-N-acetylglucosamine--N-acetylmuramyl-(pentapeptide) pyrophosphoryl-undecaprenol N-acetylglucosamine transferase (352 aa).

UDP-N-acetyl-alpha-D-glucosamine contacts are provided by S195 and Q287.

This sequence belongs to the glycosyltransferase 28 family. MurG subfamily.

The protein localises to the cell membrane. The enzyme catalyses Mur2Ac(oyl-L-Ala-gamma-D-Glu-L-Lys-D-Ala-D-Ala)-di-trans,octa-cis-undecaprenyl diphosphate + UDP-N-acetyl-alpha-D-glucosamine = beta-D-GlcNAc-(1-&gt;4)-Mur2Ac(oyl-L-Ala-gamma-D-Glu-L-Lys-D-Ala-D-Ala)-di-trans,octa-cis-undecaprenyl diphosphate + UDP + H(+). It participates in cell wall biogenesis; peptidoglycan biosynthesis. Its function is as follows. Cell wall formation. Catalyzes the transfer of a GlcNAc subunit on undecaprenyl-pyrophosphoryl-MurNAc-pentapeptide (lipid intermediate I) to form undecaprenyl-pyrophosphoryl-MurNAc-(pentapeptide)GlcNAc (lipid intermediate II). The sequence is that of UDP-N-acetylglucosamine--N-acetylmuramyl-(pentapeptide) pyrophosphoryl-undecaprenol N-acetylglucosamine transferase from Streptococcus pneumoniae (strain CGSP14).